Consider the following 784-residue polypeptide: Ent-kaurene synthase 1, chloroplastic (784 aa).

The transit peptide at 1–28 (MNLSLCIASPLLTKSSRPTALSAIHTAS) directs the protein to the chloroplast. The Mg(2+) site is built by D528, D532, N672, and E680. The DDXXD motif motif lies at 528–532 (DDFFD).

It belongs to the terpene synthase family. Requires Mg(2+) as cofactor. As to expression, accumulates in leaves.

Its subcellular location is the plastid. The protein resides in the chloroplast. The catalysed reaction is ent-copalyl diphosphate = ent-kaur-16-ene + diphosphate. The protein operates within secondary metabolite biosynthesis; terpenoid biosynthesis. It participates in plant hormone biosynthesis; gibberellin biosynthesis. Its function is as follows. Involved in the biosynthesis of ent-kaurene diterpenoids natural products such as oridonin, miltiradiene, eriocalyxin B and nezukol, known to exhibit antitumor, anti-inflammatory and antibacterial activities, and in the production of gibberellins phytohormones. Catalyzes the conversion of ent-copalyl diphosphate (ent-CPP) to ent-kaurene. In Stevia rebaudiana (Stevia), this protein is Ent-kaurene synthase 1, chloroplastic.